Consider the following 430-residue polypeptide: GTPase Obg (430 aa).

An Obg domain is found at 1–158 (MFVDQVKISL…LDVSLELKLL (158 aa)). The tract at residues 118–145 (KGGRGGRGNSRFATPRNPAPDFSEKGEP) is disordered. One can recognise an OBG-type G domain in the interval 159 to 329 (ADVGLVGFPS…LLYAIADKLE (171 aa)). GTP is bound by residues 165–172 (GFPSVGKS), 190–194 (FTTIK), 212–215 (DLPG), 282–285 (NKMD), and 310–312 (STI). Mg(2+) contacts are provided by serine 172 and threonine 192. Positions 352–430 (KHTPSQDKFT…ILGGEFEFVE (79 aa)) constitute an OCT domain.

This sequence belongs to the TRAFAC class OBG-HflX-like GTPase superfamily. OBG GTPase family. As to quaternary structure, monomer. The cofactor is Mg(2+).

The protein localises to the cytoplasm. Functionally, an essential GTPase which binds GTP, GDP and possibly (p)ppGpp with moderate affinity, with high nucleotide exchange rates and a fairly low GTP hydrolysis rate. Plays a role in control of the cell cycle, stress response, ribosome biogenesis and in those bacteria that undergo differentiation, in morphogenesis control. In Staphylococcus aureus (strain MRSA252), this protein is GTPase Obg.